A 90-amino-acid chain; its full sequence is Small ribosomal subunit protein bS20 (90 aa).

This sequence belongs to the bacterial ribosomal protein bS20 family.

In terms of biological role, binds directly to 16S ribosomal RNA. The polypeptide is Small ribosomal subunit protein bS20 (Fusobacterium nucleatum subsp. nucleatum (strain ATCC 25586 / DSM 15643 / BCRC 10681 / CIP 101130 / JCM 8532 / KCTC 2640 / LMG 13131 / VPI 4355)).